Consider the following 383-residue polypeptide: Chitinase-3-like protein 1 (383 aa).

The first 21 residues, 1-21 (MGLRVAQTGFVVLVLLQSCAA), serve as a signal peptide directing secretion. In terms of domain architecture, GH18 spans 22-383 (YKLICYYTSW…NAIKDVLAGV (362 aa)). A disulfide bridge links Cys26 with Cys51. Residue Asn60 is glycosylated (N-linked (GlcNAc...) asparagine). Residues 70–71 (EW), 97–100 (GGWN), Tyr141, 204–207 (LTYD), and Lys263 contribute to the chitin site. Cys300 and Cys364 are oxidised to a cystine. The segment at 324–338 (QWVAYDDQESVKNKA) is important for AKT1 activation and IL8 production. Trp352 serves as a coordination point for chitin.

The protein belongs to the glycosyl hydrolase 18 family. As to quaternary structure, monomer. As to expression, detected in mammary gland.

It is found in the secreted. The protein resides in the extracellular space. The protein localises to the cytoplasm. It localises to the perinuclear region. Its subcellular location is the endoplasmic reticulum. In terms of biological role, carbohydrate-binding lectin with a preference for chitin. Has no chitinase activity. May play a role in tissue remodeling and in the capacity of cells to respond to and cope with changes in their environment. Plays a role in T-helper cell type 2 (Th2) inflammatory response and IL-13-induced inflammation, regulating allergen sensitization, inflammatory cell apoptosis, dendritic cell accumulation and M2 macrophage differentiation. Facilitates invasion of pathogenic enteric bacteria into colonic mucosa and lymphoid organs. Mediates activation of AKT1 signaling pathway and subsequent IL8 production in colonic epithelial cells. Regulates antibacterial responses in lung by contributing to macrophage bacterial killing, controlling bacterial dissemination and augmenting host tolerance. Also regulates hyperoxia-induced injury, inflammation and epithelial apoptosis in lung. The chain is Chitinase-3-like protein 1 (CHI3L1) from Bubalus bubalis (Domestic water buffalo).